The sequence spans 246 residues: 3-deoxy-manno-octulosonate cytidylyltransferase (246 aa).

Belongs to the KdsB family.

It localises to the cytoplasm. The enzyme catalyses 3-deoxy-alpha-D-manno-oct-2-ulosonate + CTP = CMP-3-deoxy-beta-D-manno-octulosonate + diphosphate. It functions in the pathway nucleotide-sugar biosynthesis; CMP-3-deoxy-D-manno-octulosonate biosynthesis; CMP-3-deoxy-D-manno-octulosonate from 3-deoxy-D-manno-octulosonate and CTP: step 1/1. Its pathway is bacterial outer membrane biogenesis; lipopolysaccharide biosynthesis. Functionally, activates KDO (a required 8-carbon sugar) for incorporation into bacterial lipopolysaccharide in Gram-negative bacteria. This is 3-deoxy-manno-octulosonate cytidylyltransferase from Rickettsia peacockii (strain Rustic).